The chain runs to 180 residues: ATP synthase subunit delta (180 aa).

The protein belongs to the ATPase delta chain family. As to quaternary structure, F-type ATPases have 2 components, F(1) - the catalytic core - and F(0) - the membrane proton channel. F(1) has five subunits: alpha(3), beta(3), gamma(1), delta(1), epsilon(1). F(0) has three main subunits: a(1), b(2) and c(10-14). The alpha and beta chains form an alternating ring which encloses part of the gamma chain. F(1) is attached to F(0) by a central stalk formed by the gamma and epsilon chains, while a peripheral stalk is formed by the delta and b chains.

The protein localises to the cell membrane. F(1)F(0) ATP synthase produces ATP from ADP in the presence of a proton or sodium gradient. F-type ATPases consist of two structural domains, F(1) containing the extramembraneous catalytic core and F(0) containing the membrane proton channel, linked together by a central stalk and a peripheral stalk. During catalysis, ATP synthesis in the catalytic domain of F(1) is coupled via a rotary mechanism of the central stalk subunits to proton translocation. Functionally, this protein is part of the stalk that links CF(0) to CF(1). It either transmits conformational changes from CF(0) to CF(1) or is implicated in proton conduction. In Bacillus cereus (strain G9842), this protein is ATP synthase subunit delta.